Here is a 261-residue protein sequence, read N- to C-terminus: Receptor expression-enhancing protein 4 (261 aa).

The next 2 membrane-spanning stretches (helical) occupy residues Met1 to Tyr21 and Tyr35 to Thr55. Residues Tyr167–Asn261 form a disordered region. The segment covering Lys221–Arg230 has biased composition (polar residues).

It belongs to the DP1 family. Interacts with microtubules. In terms of tissue distribution, during gastrulation, expressed on the dorsal side of the embryo and then in the neural plate and neural tube. At tailbud stages, expressed in the somites, neural tube and otic vesicle.

The protein localises to the endoplasmic reticulum membrane. Functionally, microtubule-binding protein required to ensure proper cell division and nuclear envelope reassembly by sequestering the endoplasmic reticulum away from chromosomes during mitosis. Probably acts by clearing the endoplasmic reticulum membrane from metaphase chromosomes. May play a role in the maintenance of both the nervous system and the musculature. The sequence is that of Receptor expression-enhancing protein 4 (reep4) from Xenopus laevis (African clawed frog).